Reading from the N-terminus, the 383-residue chain is Acetylornithine deacetylase (383 aa).

Zn(2+) is bound at residue His80. Asp82 is a catalytic residue. Residue Asp112 participates in Zn(2+) binding. The active site involves Glu144. Residues Glu145, Glu169, and His355 each coordinate Zn(2+).

Belongs to the peptidase M20A family. ArgE subfamily. As to quaternary structure, homodimer. Zn(2+) is required as a cofactor. Co(2+) serves as cofactor. It depends on glutathione as a cofactor.

It localises to the cytoplasm. It catalyses the reaction N(2)-acetyl-L-ornithine + H2O = L-ornithine + acetate. It functions in the pathway amino-acid biosynthesis; L-arginine biosynthesis; L-ornithine from N(2)-acetyl-L-ornithine (linear): step 1/1. Its function is as follows. Catalyzes the hydrolysis of the amide bond of N(2)-acetylated L-amino acids. Cleaves the acetyl group from N-acetyl-L-ornithine to form L-ornithine, an intermediate in L-arginine biosynthesis pathway, and a branchpoint in the synthesis of polyamines. The polypeptide is Acetylornithine deacetylase (Shigella boydii serotype 18 (strain CDC 3083-94 / BS512)).